The chain runs to 281 residues: tRNA dimethylallyltransferase (281 aa).

Interaction with substrate tRNA regions lie at residues 13–16 and 133–137; these read DSAQ and QRITR.

This sequence belongs to the IPP transferase family. Monomer. Mg(2+) serves as cofactor.

The enzyme catalyses adenosine(37) in tRNA + dimethylallyl diphosphate = N(6)-dimethylallyladenosine(37) in tRNA + diphosphate. Functionally, catalyzes the transfer of a dimethylallyl group onto the adenine at position 37 in tRNAs that read codons beginning with uridine, leading to the formation of N6-(dimethylallyl)adenosine (i(6)A). The polypeptide is tRNA dimethylallyltransferase (Novosphingobium aromaticivorans (strain ATCC 700278 / DSM 12444 / CCUG 56034 / CIP 105152 / NBRC 16084 / F199)).